We begin with the raw amino-acid sequence, 85 residues long: Phosphocarrier protein HPr (85 aa).

The 85-residue stretch at 1 to 85 (MYSKDVEIIA…HLVALIPTLE (85 aa)) folds into the HPr domain. His15 serves as the catalytic Pros-phosphohistidine intermediate.

It belongs to the HPr family.

Its subcellular location is the cytoplasm. Functionally, general (non sugar-specific) component of the phosphoenolpyruvate-dependent sugar phosphotransferase system (sugar PTS). This major carbohydrate active-transport system catalyzes the phosphorylation of incoming sugar substrates concomitantly with their translocation across the cell membrane. The phosphoryl group from phosphoenolpyruvate (PEP) is transferred to the phosphoryl carrier protein HPr by enzyme I. Phospho-HPr then transfers it to the PTS EIIA domain. The chain is Phosphocarrier protein HPr (ptsH) from Haemophilus influenzae (strain ATCC 51907 / DSM 11121 / KW20 / Rd).